The sequence spans 28 residues: uncharacterized protein (28 aa).

This is an uncharacterized protein from Saccharomyces cerevisiae (strain ATCC 204508 / S288c) (Baker's yeast).